Consider the following 487-residue polypeptide: N-succinylglutamate 5-semialdehyde dehydrogenase (487 aa).

221–226 (GSSRTG) contributes to the NAD(+) binding site. Active-site residues include glutamate 244 and cysteine 278.

This sequence belongs to the aldehyde dehydrogenase family. AstD subfamily.

The enzyme catalyses N-succinyl-L-glutamate 5-semialdehyde + NAD(+) + H2O = N-succinyl-L-glutamate + NADH + 2 H(+). The protein operates within amino-acid degradation; L-arginine degradation via AST pathway; L-glutamate and succinate from L-arginine: step 4/5. Functionally, catalyzes the NAD-dependent reduction of succinylglutamate semialdehyde into succinylglutamate. This chain is N-succinylglutamate 5-semialdehyde dehydrogenase, found in Pseudomonas putida (strain ATCC 47054 / DSM 6125 / CFBP 8728 / NCIMB 11950 / KT2440).